The chain runs to 63 residues: Large ribosomal subunit protein uL29 (63 aa).

It belongs to the universal ribosomal protein uL29 family.

The polypeptide is Large ribosomal subunit protein uL29 (Ectopseudomonas mendocina (strain ymp) (Pseudomonas mendocina)).